The sequence spans 149 residues: MYRMQLLSCIALTLAVLANSAPTSSSKRETQQQLKQLQMDLKLLLEGVNNNKNPKLSKILTFKINMPKKATELKHLQCLEEELKPLEEMLKNFLSKDIKELMSNINVTVLGLKGSETRFTCEYDNETETIVEFLNKWITFCQSIISTLT.

The first 20 residues, 1–20 (MYRMQLLSCIALTLAVLANS), serve as a signal peptide directing secretion. The O-linked (GalNAc...) threonine glycan is linked to threonine 23. An intrachain disulfide couples cysteine 78 to cysteine 121. An N-linked (GlcNAc...) asparagine glycan is attached at asparagine 106.

The protein belongs to the IL-2 family.

Its subcellular location is the secreted. In terms of biological role, cytokine produced by activated CD4-positive helper T-cells and to a lesser extend activated CD8-positive T-cells and natural killer (NK) cells that plays pivotal roles in the immune response and tolerance. Binds to a receptor complex composed of either the high-affinity trimeric IL-2R (IL2RA/CD25, IL2RB/CD122 and IL2RG/CD132) or the low-affinity dimeric IL-2R (IL2RB and IL2RG). Interaction with the receptor leads to oligomerization and conformation changes in the IL-2R subunits resulting in downstream signaling starting with phosphorylation of JAK1 and JAK3. In turn, JAK1 and JAK3 phosphorylate the receptor to form a docking site leading to the phosphorylation of several substrates including STAT5. This process leads to activation of several pathways including STAT, phosphoinositide-3-kinase/PI3K and mitogen-activated protein kinase/MAPK pathways. Functions as a T-cell growth factor and can increase NK-cell cytolytic activity as well. Promotes strong proliferation of activated B-cells and subsequently immunoglobulin production. Plays a pivotal role in regulating the adaptive immune system by controlling the survival and proliferation of regulatory T-cells, which are required for the maintenance of immune tolerance. Moreover, participates in the differentiation and homeostasis of effector T-cell subsets, including Th1, Th2, Th17 as well as memory CD8-positive T-cells. This chain is Interleukin-2 (IL2), found in Equus caballus (Horse).